Here is a 502-residue protein sequence, read N- to C-terminus: Actin nucleation-promoting factor WAS (502 aa).

Residues 39–148 (LGRKCLTLAT…ALVQEKIQKR (110 aa)) form the WH1 domain. Residues 146 to 240 (QKRNQRQSGD…KKISKADIGA (95 aa)) form a disordered region. Positions 201-211 (DIQNPDITSSR) are enriched in polar residues. Phosphoserine is present on Ser221. A CRIB domain is found at 238-251 (IGAPSGFKHVSHVG). A Phosphotyrosine; by FYN and HCK modification is found at Tyr291. The interval 307–502 (MRRQEPLPPP…DEDEDDEWDD (196 aa)) is disordered. GRSGPLPPXP motif repeat units follow at residues 337-346 (GRSGPLPPVP) and 376-385 (GRSGPLPPPP). Positions 341–419 (PLPPVPLGIA…PAPPPLPPAL (79 aa)) are enriched in pro residues. Positions 430–447 (GRGALLDQIRQGIQLNKT) constitute a WH2 domain. Phosphoserine; by CK2 is present on residues Ser483 and Ser484. Positions 486-502 (EGEDQAGDEDEDDEWDD) are enriched in acidic residues.

As to quaternary structure, binds the Arp2/3 complex. Interacts with CDC42, RAC, NCK, HCK, FYN, SRC kinase FGR, BTK, ABL1, PSTPIP1, WIP, and to the p85 subunit of PLC-gamma. Interacts (via C-terminus) with ALDOA. Interacts with NCK1 (via SH3 domains). Interacts with FCHSD2. (Microbial infection) Interacts with E.coli effector protein EspF(U). In terms of processing, phosphorylated at Tyr-291 by FYN and HCK, inducing WAS effector activity after TCR engagement. Phosphorylation at Tyr-291 enhances WAS activity in promoting actin polymerization and filopodia formation. In terms of tissue distribution, expressed predominantly in the thymus. Also found, to a much lesser extent, in the spleen.

Its subcellular location is the cytoplasm. The protein resides in the cytoskeleton. The protein localises to the nucleus. Functionally, effector protein for Rho-type GTPases that regulates actin filament reorganization via its interaction with the Arp2/3 complex. Important for efficient actin polymerization. Possible regulator of lymphocyte and platelet function. Mediates actin filament reorganization and the formation of actin pedestals upon infection by pathogenic bacteria. In addition to its role in the cytoplasmic cytoskeleton, also promotes actin polymerization in the nucleus, thereby regulating gene transcription and repair of damaged DNA. Promotes homologous recombination (HR) repair in response to DNA damage by promoting nuclear actin polymerization, leading to drive motility of double-strand breaks (DSBs). This is Actin nucleation-promoting factor WAS (WAS) from Homo sapiens (Human).